A 229-amino-acid chain; its full sequence is 2-C-methyl-D-erythritol 4-phosphate cytidylyltransferase (229 aa).

This sequence belongs to the IspD/TarI cytidylyltransferase family. IspD subfamily.

The enzyme catalyses 2-C-methyl-D-erythritol 4-phosphate + CTP + H(+) = 4-CDP-2-C-methyl-D-erythritol + diphosphate. The protein operates within isoprenoid biosynthesis; isopentenyl diphosphate biosynthesis via DXP pathway; isopentenyl diphosphate from 1-deoxy-D-xylulose 5-phosphate: step 2/6. Functionally, catalyzes the formation of 4-diphosphocytidyl-2-C-methyl-D-erythritol from CTP and 2-C-methyl-D-erythritol 4-phosphate (MEP). The chain is 2-C-methyl-D-erythritol 4-phosphate cytidylyltransferase from Clostridium botulinum (strain Okra / Type B1).